A 754-amino-acid polypeptide reads, in one-letter code: Elongation factor G-2, mitochondrial (754 aa).

The 278-residue stretch at 63 to 340 (DKLRNIGISA…GVVSFLPSPN (278 aa)) folds into the tr-type G domain. GTP contacts are provided by residues 72 to 79 (AHIDSGKT), 139 to 143 (DTPGH), and 193 to 196 (NKLD).

It belongs to the TRAFAC class translation factor GTPase superfamily. Classic translation factor GTPase family. EF-G/EF-2 subfamily. In terms of tissue distribution, expressed in cotyledons and adult leaves at the same levels.

Its subcellular location is the mitochondrion. It participates in protein biosynthesis; polypeptide chain elongation. Its function is as follows. Mitochondrial GTPase that catalyzes the GTP-dependent ribosomal translocation step during translation elongation. During this step, the ribosome changes from the pre-translocational (PRE) to the post-translocational (POST) state as the newly formed A-site-bound peptidyl-tRNA and P-site-bound deacylated tRNA move to the P and E sites, respectively. Catalyzes the coordinated movement of the two tRNA molecules, the mRNA and conformational changes in the ribosome. This is Elongation factor G-2, mitochondrial (MEFG2) from Arabidopsis thaliana (Mouse-ear cress).